The primary structure comprises 274 residues: MNLEHNFNLPNYINHHLHHLQLNLSNLKFLNFNDNYIRNFWVCNFDSIFLSIFLGLVILISFFKISKTFTIQTPNKIQICIELIIDFINNNVKEIYHGKNKLIAPLSLTIFVWIFLMNLMDLIPIDLVPFIFQNFFETQIPIKLVPTTDVNITISMSLVVFLLIIFYSIKIKGIKGFLKDLFLQPFHNPIFFVFNFILESISLLSKPVSLGLRLFGNMYAGEMIFILISGLLPWWLQWILSVPWAIFHILIISLQSFIFMVLTIVYLSMASTKH.

The next 5 membrane-spanning stretches (helical) occupy residues 40–60, 110–130, 149–169, 224–244, and 245–265; these read FWVC…VILI, IFVW…LVPF, DVNI…FYSI, IFIL…SVPW, and AIFH…LTIV.

The protein belongs to the ATPase A chain family. F-type ATPases have 2 components, CF(1) - the catalytic core - and CF(0) - the membrane proton channel. CF(1) has five subunits: alpha(3), beta(3), gamma(1), delta(1), epsilon(1). CF(0) has three main subunits: a(1), b(2) and c(9-12). The alpha and beta chains form an alternating ring which encloses part of the gamma chain. CF(1) is attached to CF(0) by a central stalk formed by the gamma and epsilon chains, while a peripheral stalk is formed by the delta and b chains.

It is found in the cell membrane. Key component of the proton channel; it plays a direct role in the translocation of protons across the membrane. In Buchnera aphidicola subsp. Baizongia pistaciae (strain Bp), this protein is ATP synthase subunit a.